The sequence spans 403 residues: RNA-binding motif, single-stranded-interacting protein 1 (403 aa).

The disordered stretch occupies residues 30 to 56; the sequence is PAHPMAPPSPSTTSSNNNSSSSSNSGW. Over residues 40–54 the composition is skewed to low complexity; it reads STTSSNNNSSSSSNS. 2 RRM domains span residues 62–135 and 141–226; these read TNLY…MAKQ and TNLY…FADG. Threonine 208 carries the post-translational modification Phosphothreonine.

It is found in the nucleus. Single-stranded DNA binding protein that interacts with the region upstream of the MYC gene. Binds specifically to the DNA sequence motif 5'-[AT]CT[AT][AT]T-3'. Probably has a role in DNA replication. This Rattus norvegicus (Rat) protein is RNA-binding motif, single-stranded-interacting protein 1.